We begin with the raw amino-acid sequence, 365 residues long: 2-aminoethylphosphonate--pyruvate transaminase (365 aa).

Lys194 bears the N6-(pyridoxal phosphate)lysine mark.

This sequence belongs to the class-V pyridoxal-phosphate-dependent aminotransferase family. PhnW subfamily. In terms of assembly, homodimer. Pyridoxal 5'-phosphate is required as a cofactor.

It catalyses the reaction (2-aminoethyl)phosphonate + pyruvate = phosphonoacetaldehyde + L-alanine. Functionally, involved in phosphonate degradation. This Bacillus thuringiensis subsp. konkukian (strain 97-27) protein is 2-aminoethylphosphonate--pyruvate transaminase.